Consider the following 333-residue polypeptide: HTH-type transcriptional repressor PurR (333 aa).

Residues 2 to 56 (ATIKDVAKMAGVSTTTVSHVINKTRFVAKETEQQVLQAIKNLNYSPSAVARSLKV) enclose the HTH lacI-type domain. Positions 4 to 23 (IKDVAKMAGVSTTTVSHVIN) form a DNA-binding region, H-T-H motif. The DNA-binding element occupies 48-56 (SAVARSLKV). Positions 73, 189, 191, 220, and 274 each coordinate hypoxanthine.

In terms of assembly, homodimer.

It functions in the pathway purine metabolism; purine nucleotide biosynthesis [regulation]. Is the main repressor of the genes involved in the de novo synthesis of purine nucleotides, regulating purB, purC, purEK, purF, purHD, purL, purMN and guaBA expression. PurR is allosterically activated to bind its cognate DNA by binding the purine corepressors, hypoxanthine or guanine, thereby effecting transcription repression. This chain is HTH-type transcriptional repressor PurR, found in Histophilus somni (strain 129Pt) (Haemophilus somnus).